The following is a 398-amino-acid chain: Phosphoglycerate kinase (398 aa).

Residues 23–25 (DFN), arginine 38, 61–64 (HMGK), arginine 122, and arginine 155 contribute to the substrate site. ATP is bound by residues lysine 206, glycine 297, glutamate 328, and 354-357 (GGDS).

The protein belongs to the phosphoglycerate kinase family. Monomer.

It is found in the cytoplasm. It catalyses the reaction (2R)-3-phosphoglycerate + ATP = (2R)-3-phospho-glyceroyl phosphate + ADP. It participates in carbohydrate degradation; glycolysis; pyruvate from D-glyceraldehyde 3-phosphate: step 2/5. The protein is Phosphoglycerate kinase of Clostridium botulinum (strain Kyoto / Type A2).